The primary structure comprises 365 residues: Probable flavin mononucleotide-dependent alkene reductase (365 aa).

Residues Pro30–Thr32, Ala63, and Gln105 each bind FMN. Tyr191 acts as the Proton donor in catalysis. FMN-binding positions include Arg238, Ser303, and Gly324–Thr325.

It belongs to the NADH:flavin oxidoreductase/NADH oxidase family. Monomer. Requires FMN as cofactor.

It is found in the cytoplasm. It localises to the cytosol. In terms of biological role, may function as a flavin mononucleotide (FMN)-dependent alkene reductase on substrates carrying alpha,beta-unsaturated carbonyl groups (ketones, aldehydes, carboxylic acids, esters, lactones or cyclic imides). The catalysis depends on NAD(P)H, which acts as a hydride donor for the reduction. Seems to be involved in metabolic pathways required for efficient replication of amastigotes within macrophages. Its function is as follows. Acts as a FMN-dependent nitroreductase that activates anti-leishmanial bicyclic nitroaromatic prodrugs including delamanid, DNDI-VL-2098 and (R)-PA-824, forming toxic products that kill the parasites. The chain is Probable flavin mononucleotide-dependent alkene reductase from Leishmania infantum.